Here is a 259-residue protein sequence, read N- to C-terminus: Dihydroorotate dehydrogenase B (NAD(+)), electron transfer subunit (259 aa).

One can recognise an FAD-binding FR-type domain in the interval 2–102 (MQKQNMIVVN…LGPLGHGFPV (101 aa)). FAD contacts are provided by residues 53–56 (RPIS), 70–72 (LYR), and 77–78 (GT). The [2Fe-2S] cluster site is built by Cys-221, Cys-226, Cys-229, and Cys-246.

It belongs to the PyrK family. In terms of assembly, heterotetramer of 2 PyrK and 2 PyrD type B subunits. [2Fe-2S] cluster is required as a cofactor. Requires FAD as cofactor.

It functions in the pathway pyrimidine metabolism; UMP biosynthesis via de novo pathway; orotate from (S)-dihydroorotate (NAD(+) route): step 1/1. In terms of biological role, responsible for channeling the electrons from the oxidation of dihydroorotate from the FMN redox center in the PyrD type B subunit to the ultimate electron acceptor NAD(+). The sequence is that of Dihydroorotate dehydrogenase B (NAD(+)), electron transfer subunit from Bacillus cereus (strain ATCC 14579 / DSM 31 / CCUG 7414 / JCM 2152 / NBRC 15305 / NCIMB 9373 / NCTC 2599 / NRRL B-3711).